We begin with the raw amino-acid sequence, 395 residues long: 1-deoxy-D-xylulose 5-phosphate reductoisomerase (395 aa).

T10, G11, S12, I13, and N123 together coordinate NADPH. K124 contacts 1-deoxy-D-xylulose 5-phosphate. E125 provides a ligand contact to NADPH. Position 149 (D149) interacts with Mn(2+). 4 residues coordinate 1-deoxy-D-xylulose 5-phosphate: S150, E151, S185, and H208. Mn(2+) is bound at residue E151. NADPH is bound at residue G214. 1-deoxy-D-xylulose 5-phosphate is bound by residues S221, N226, K227, and E230. A Mn(2+)-binding site is contributed by E230.

It belongs to the DXR family. It depends on Mg(2+) as a cofactor. Mn(2+) is required as a cofactor.

The enzyme catalyses 2-C-methyl-D-erythritol 4-phosphate + NADP(+) = 1-deoxy-D-xylulose 5-phosphate + NADPH + H(+). The protein operates within isoprenoid biosynthesis; isopentenyl diphosphate biosynthesis via DXP pathway; isopentenyl diphosphate from 1-deoxy-D-xylulose 5-phosphate: step 1/6. In terms of biological role, catalyzes the NADPH-dependent rearrangement and reduction of 1-deoxy-D-xylulose-5-phosphate (DXP) to 2-C-methyl-D-erythritol 4-phosphate (MEP). The protein is 1-deoxy-D-xylulose 5-phosphate reductoisomerase of Shewanella sediminis (strain HAW-EB3).